We begin with the raw amino-acid sequence, 131 residues long: Small ribosomal subunit protein uS8 (131 aa).

It belongs to the universal ribosomal protein uS8 family. As to quaternary structure, part of the 30S ribosomal subunit. Contacts proteins S5 and S12.

In terms of biological role, one of the primary rRNA binding proteins, it binds directly to 16S rRNA central domain where it helps coordinate assembly of the platform of the 30S subunit. In Nitrosomonas europaea (strain ATCC 19718 / CIP 103999 / KCTC 2705 / NBRC 14298), this protein is Small ribosomal subunit protein uS8.